The chain runs to 336 residues: Holliday junction branch migration complex subunit RuvB (336 aa).

Residues 1–182 are large ATPase domain (RuvB-L); it reads MKERIVNLET…FGMSFRMQFY (182 aa). ATP-binding positions include L21, R22, G63, K66, T67, S68, 129-131, R172, Y182, and R219; that span reads EDF. T67 is a binding site for Mg(2+). The interval 183–253 is small ATPAse domain (RuvB-S); the sequence is SPSELSLIIK…ITLHALNELG (71 aa). A head domain (RuvB-H) region spans residues 256 to 336; sequence ELGFDEADLA…IPTLNPQTLF (81 aa). DNA-binding residues include R310 and R315.

This sequence belongs to the RuvB family. Homohexamer. Forms an RuvA(8)-RuvB(12)-Holliday junction (HJ) complex. HJ DNA is sandwiched between 2 RuvA tetramers; dsDNA enters through RuvA and exits via RuvB. An RuvB hexamer assembles on each DNA strand where it exits the tetramer. Each RuvB hexamer is contacted by two RuvA subunits (via domain III) on 2 adjacent RuvB subunits; this complex drives branch migration. In the full resolvosome a probable DNA-RuvA(4)-RuvB(12)-RuvC(2) complex forms which resolves the HJ.

It localises to the cytoplasm. The enzyme catalyses ATP + H2O = ADP + phosphate + H(+). In terms of biological role, the RuvA-RuvB-RuvC complex processes Holliday junction (HJ) DNA during genetic recombination and DNA repair, while the RuvA-RuvB complex plays an important role in the rescue of blocked DNA replication forks via replication fork reversal (RFR). RuvA specifically binds to HJ cruciform DNA, conferring on it an open structure. The RuvB hexamer acts as an ATP-dependent pump, pulling dsDNA into and through the RuvAB complex. RuvB forms 2 homohexamers on either side of HJ DNA bound by 1 or 2 RuvA tetramers; 4 subunits per hexamer contact DNA at a time. Coordinated motions by a converter formed by DNA-disengaged RuvB subunits stimulates ATP hydrolysis and nucleotide exchange. Immobilization of the converter enables RuvB to convert the ATP-contained energy into a lever motion, pulling 2 nucleotides of DNA out of the RuvA tetramer per ATP hydrolyzed, thus driving DNA branch migration. The RuvB motors rotate together with the DNA substrate, which together with the progressing nucleotide cycle form the mechanistic basis for DNA recombination by continuous HJ branch migration. Branch migration allows RuvC to scan DNA until it finds its consensus sequence, where it cleaves and resolves cruciform DNA. The chain is Holliday junction branch migration complex subunit RuvB from Helicobacter pylori (strain J99 / ATCC 700824) (Campylobacter pylori J99).